A 75-amino-acid polypeptide reads, in one-letter code: NECIRKWLSCVDRKNDCCEGLECYKRRHSFEVCVPIPGFCLVKWKQCDGRERDCCPGLECWKRSGNKSSVCAPIT.

Intrachain disulfides connect C3-C18, C10-C23, C17-C33, C40-C55, C47-C60, and C54-C71. Domain repeat units lie at residues 3–33 (CIRK…FEVC) and 40–71 (CLVK…SSVC). Positions 3 to 71 (CIRKWLSCVD…KRSGNKSSVC (69 aa)) are 2 X approximate repeats with cysteine pattern C-C-CC-C-C.

Belongs to the psalmotoxin-1 family. Double-knot toxin subfamily. Expressed by the venom gland.

Its subcellular location is the secreted. This toxin potently and selectively inhibits ASIC1a, an isoform of the gene ASIC1. It incompletely inhibits ASIC1a activation in a pH-independent and slowly reversible manner. This toxin acts by binding to and stabilizing the closed state of the channel, thereby impeding the transition into a conducting state. This toxin may bind to the acidic pocket of ASIC1a, since mutation of a key residue of this pocket (Arg-350) abolishes the ability of the toxin to inhibit ASIC1a. In vivo, this toxin protects the brain from neuronal injury when administered up to 8 hours after stroke onset. The protein is Pi-hexatoxin-Hi1b of Hadronyche infensa (Fraser island funnel-web spider).